The primary structure comprises 205 residues: Golgi apparatus membrane protein TVP23 homolog B (205 aa).

Residue Met-1 is modified to N-acetylmethionine. Positions 1-21 (MLQQDSNDDTEDVSLFDAEEE) are disordered. Transmembrane regions (helical) follow at residues 34–53 (PVASFFHLFFRVSAIIVYLL), 54–72 (CELLSSSFITCMVTIILLL), 126–146 (IFWLGLIACPVLWVIFAFSAL), and 152–172 (KWLAVVIMGVVLQGANLYGYI).

Belongs to the TVP23 family.

The protein resides in the membrane. The chain is Golgi apparatus membrane protein TVP23 homolog B (TVP23B) from Pongo abelii (Sumatran orangutan).